The following is a 412-amino-acid chain: DNA polymerase IV (412 aa).

A UmuC domain is found at 12–193 (ILHVDMNCFF…LPVGAMHGIG (182 aa)). Mg(2+) is bound by residues Asp16 and Asp112. Glu113 is an active-site residue. The tract at residues 235 to 257 (KGMDDREVDPSQMGQHKSVGNSM) is disordered. Positions 246–257 (QMGQHKSVGNSM) are enriched in polar residues.

The protein belongs to the DNA polymerase type-Y family. Monomer. The cofactor is Mg(2+).

It is found in the cytoplasm. The enzyme catalyses DNA(n) + a 2'-deoxyribonucleoside 5'-triphosphate = DNA(n+1) + diphosphate. Its function is as follows. Poorly processive, error-prone DNA polymerase involved in untargeted mutagenesis. Copies undamaged DNA at stalled replication forks, which arise in vivo from mismatched or misaligned primer ends. These misaligned primers can be extended by PolIV. Exhibits no 3'-5' exonuclease (proofreading) activity. May be involved in translesional synthesis, in conjunction with the beta clamp from PolIII. The chain is DNA polymerase IV from Bacillus anthracis.